A 447-amino-acid polypeptide reads, in one-letter code: Tubulin beta-1 chain (447 aa).

GTP-binding residues include Gln-11, Glu-69, Ser-138, Gly-142, Thr-143, Gly-144, Asn-204, and Asn-226. Glu-69 provides a ligand contact to Mg(2+). The disordered stretch occupies residues 428 to 447 (ATADEDAEFDEEQEQEIEDN). Acidic residues predominate over residues 429-447 (TADEDAEFDEEQEQEIEDN).

The protein belongs to the tubulin family. In terms of assembly, dimer of alpha and beta chains. A typical microtubule is a hollow water-filled tube with an outer diameter of 25 nm and an inner diameter of 15 nM. Alpha-beta heterodimers associate head-to-tail to form protofilaments running lengthwise along the microtubule wall with the beta-tubulin subunit facing the microtubule plus end conferring a structural polarity. Microtubules usually have 13 protofilaments but different protofilament numbers can be found in some organisms and specialized cells. The cofactor is Mg(2+).

The protein resides in the cytoplasm. It localises to the cytoskeleton. Tubulin is the major constituent of microtubules, a cylinder consisting of laterally associated linear protofilaments composed of alpha- and beta-tubulin heterodimers. Microtubules grow by the addition of GTP-tubulin dimers to the microtubule end, where a stabilizing cap forms. Below the cap, tubulin dimers are in GDP-bound state, owing to GTPase activity of alpha-tubulin. In Manduca sexta (Tobacco hawkmoth), this protein is Tubulin beta-1 chain.